Here is a 516-residue protein sequence, read N- to C-terminus: GTPase Obg (516 aa).

The Obg domain maps to 4-161 (PTFVDRVTLH…LEIVLELKVV (158 aa)). Residues 162 to 332 (ADIGLVGFPS…LTFAMAGIVE (171 aa)) enclose the OBG-type G domain. Residues 168-175 (GFPSAGKS), 193-197 (FTTLV), 214-217 (DVPG), 284-287 (NKVD), and 313-315 (SAA) contribute to the GTP site. Residues Ser-175 and Thr-195 each contribute to the Mg(2+) site. The 82-residue stretch at 351-432 (PSVDGSDAFT…ENAVVFDFKP (82 aa)) folds into the OCT domain. Positions 466–491 (AMADRAEGETRADVARRLDRPAREDG) are enriched in basic and acidic residues. A disordered region spans residues 466 to 516 (AMADRAEGETRADVARRLDRPAREDGGAYGPQSYEIGGRDDPDWAEEDLGE).

It belongs to the TRAFAC class OBG-HflX-like GTPase superfamily. OBG GTPase family. Monomer. Requires Mg(2+) as cofactor.

It localises to the cytoplasm. An essential GTPase which binds GTP, GDP and possibly (p)ppGpp with moderate affinity, with high nucleotide exchange rates and a fairly low GTP hydrolysis rate. Plays a role in control of the cell cycle, stress response, ribosome biogenesis and in those bacteria that undergo differentiation, in morphogenesis control. The chain is GTPase Obg from Nocardioides sp. (strain ATCC BAA-499 / JS614).